Here is a 1385-residue protein sequence, read N- to C-terminus: MAILNELYPSVPYNVLAYTPPSFLPDAGTQATPADLTAYEQLLKNLEKGINAGTYSKAIADVLKGIFIDDTINYQTYVNIGLSLITLAVPEIGIFTPFIGLFFAALNKHDAPPPPNAKDIFEAMKPAIQEMIDRTLTADEQTFLNGEISGLQNLAARYQSTMDDIQSHGGFNKVDSGLIKKFTDEVLSLNSFYTDRLPVFITDNTADRTLLGLPYYAILASMHLMLLRDIITKGPTWDSKINFTPDAIDSFKTDIKNNIKLYSKTIYDVFQKGLASYGTPSDLESFAKKQKYIEIMTTHCLDFARLFPTFDPDLYPTGSGDISLQKTRRILSPFIPIRTADGLTLNNTSIDTSNWPNYENGNGAFPNPKERILKQFKLYPSWRAGQYGGLLQPYLWAIEVQDSVETRLYGQLPAVDPQAGPNYVSIDSSNPIIQINMDTWKTPPQGASGWNTNLMRGSVSGLSFLQRDGTRLSAGMGGGFADTIYSLPATHYLSYLYGTPYQTSDNYSGHVGALVGVSTPQEATLPNIIGQPDEQGNVSTMGFPFEKASYGGTVVKEWLNGANAMKLSPGQSIGIPITNVTSGEYQIRCRYASNDNTNVFFNVDTGGANPIFQQINFASTVDNNTGVQGANGVYVVKSIATTDNSFTEIPAKTINVHLTNQGSSDVFLDRIEFIPFSLPLIYHGSYNTSSGADDVLWSSSNMNYYDIIVNGQANSSSIASSMHLLNKGKVIKTIDIPGHSETFFATFPVPEGFNEVRILAGLPEVSGNITVQSNNPPQPSNNGGGDGGGNGGGDGGQYNFSLSGSDHTTIYHGKLETGIHVQGNYTYTGTPVLILNAYRNNTVVSSIPVYSPFDITIQTEADSLELELQPRYGFATVNGTATVKSPNVNYDRSFKLPIDLQNITTQVNALFASGTQNMLAHNVSDHDIEEVVLKVDALSDEVFGDEKKALRKLVNQAKRLSRARNLLIGGSFENWDAWYKGRNVVTVSDHELFKSDHVLLPPPGLSPSYIFQKVEESKLKPNTRYIVSGFIAHGKDLEIVVSRYGQEVQKVVQVPYGEAFPLTSNGPVCCPPRSTSNGTLGDPHFFSYSIDVGALDLQANPGIEFGLRIVNPTGMARVSNLEIREDRPLAANEIRQVQRVARNWRTEYEKERAEVTSLIQPVINRINGLYENGNWNGSIRSDISYQNIDAIVLPTLPKLRHWFMSDRFSEQGDIMAKFQGALNRAYAQLEQSTLLHNGHFTKDAANWTIEGDAHQITLEDGRRVLRLPDWSSSVSQMIEIENFNPDKEYNLVFHGQGEGTVTLEHGEETKYIETHTHHFANFTTSQRQGLTFESNKVTVTISSEDGEFLVDNIALVEAPLPTDDQNSEGNTASSTNSDTSMNNNQ.

Disordered stretches follow at residues 768–799 (NITVQSNNPPQPSNNGGGDGGGNGGGDGGQYN) and 1359–1385 (PLPTDDQNSEGNTASSTNSDTSMNNNQ). Residues 782-796 (NGGGDGGGNGGGDGG) show a composition bias toward gly residues. Low complexity predominate over residues 1370 to 1385 (NTASSTNSDTSMNNNQ).

It belongs to the delta endotoxin family.

Functionally, endotoxin with nematicidal activity. The polypeptide is Pesticidal crystal protein Cry5Aa (cry5Aa) (Bacillus thuringiensis subsp. darmstadiensis).